A 415-amino-acid chain; its full sequence is Imidazolonepropionase (415 aa).

Fe(3+) is bound by residues H83 and H85. Residues H83 and H85 each contribute to the Zn(2+) site. 4-imidazolone-5-propanoate contacts are provided by R92, Y155, and H188. Residue Y155 coordinates N-formimidoyl-L-glutamate. H250 is a binding site for Fe(3+). H250 is a Zn(2+) binding site. Residue Q253 participates in 4-imidazolone-5-propanoate binding. Residue D324 coordinates Fe(3+). D324 is a binding site for Zn(2+). Residues N326 and G328 each contribute to the N-formimidoyl-L-glutamate site. 4-imidazolone-5-propanoate is bound at residue S329.

It belongs to the metallo-dependent hydrolases superfamily. HutI family. The cofactor is Zn(2+). Fe(3+) is required as a cofactor.

The protein resides in the cytoplasm. The enzyme catalyses 4-imidazolone-5-propanoate + H2O = N-formimidoyl-L-glutamate. Its pathway is amino-acid degradation; L-histidine degradation into L-glutamate; N-formimidoyl-L-glutamate from L-histidine: step 3/3. Functionally, catalyzes the hydrolytic cleavage of the carbon-nitrogen bond in imidazolone-5-propanoate to yield N-formimidoyl-L-glutamate. It is the third step in the universal histidine degradation pathway. This chain is Imidazolonepropionase, found in Rubrobacter xylanophilus (strain DSM 9941 / JCM 11954 / NBRC 16129 / PRD-1).